The chain runs to 317 residues: Transaldolase (317 aa).

The Schiff-base intermediate with substrate role is filled by Lys132.

It belongs to the transaldolase family. Type 1 subfamily. Homodimer.

It is found in the cytoplasm. The catalysed reaction is D-sedoheptulose 7-phosphate + D-glyceraldehyde 3-phosphate = D-erythrose 4-phosphate + beta-D-fructose 6-phosphate. Its pathway is carbohydrate degradation; pentose phosphate pathway; D-glyceraldehyde 3-phosphate and beta-D-fructose 6-phosphate from D-ribose 5-phosphate and D-xylulose 5-phosphate (non-oxidative stage): step 2/3. Its function is as follows. Transaldolase is important for the balance of metabolites in the pentose-phosphate pathway. The sequence is that of Transaldolase from Edwardsiella ictaluri (strain 93-146).